A 348-amino-acid polypeptide reads, in one-letter code: Major outer membrane protein P.IB (348 aa).

A signal peptide spans 1–19 (MKKSLIALTLAALPVAATA).

Belongs to the Gram-negative porin family. As to quaternary structure, homotrimer.

Its subcellular location is the cell outer membrane. Serves as a slightly cation selective porin. Major antigen on the gonococcal cell surface and it may have pathogenic properties in addition to its porin activity. The sequence is that of Major outer membrane protein P.IB (porB) from Neisseria gonorrhoeae.